The chain runs to 535 residues: Alpha-1,3-mannosyl-glycoprotein 4-beta-N-acetylglucosaminyltransferase A (535 aa).

Residues 1-6 are Cytoplasmic-facing; sequence MRLRNG. A helical; Signal-anchor for type II membrane protein membrane pass occupies residues 7–27; sequence TVATALVFVTSFLTLSWYTTW. The stretch at 28–63 forms a coiled coil; the sequence is QNGKEKLIAYQREFLALKERLRVAEHRISQRSSELN. The Lumenal segment spans residues 28 to 535; sequence QNGKEKLIAY…NEIHIKKVTS (508 aa). Residues N77 and N458 are each glycosylated (N-linked (GlcNAc...) asparagine). Residue S474 is modified to Phosphoserine.

The protein belongs to the glycosyltransferase 54 family. The cofactor is a divalent metal cation. In terms of processing, N-glycosylated.

The protein localises to the golgi apparatus membrane. It is found in the secreted. It carries out the reaction N(4)-{beta-D-GlcNAc-(1-&gt;2)-alpha-D-Man-(1-&gt;3)-[beta-D-GlcNAc-(1-&gt;2)-alpha-D-Man-(1-&gt;6)]-beta-D-Man-(1-&gt;4)-beta-D-GlcNAc-(1-&gt;4)-beta-D-GlcNAc}-L-asparaginyl-[protein] + UDP-N-acetyl-alpha-D-glucosamine = N(4)-{beta-D-GlcNAc-(1-&gt;2)-[beta-D-GlcNAc-(1-&gt;4)]-alpha-D-Man-(1-&gt;3)-[beta-D-GlcNAc-(1-&gt;2)-alpha-D-Man-(1-&gt;6)]-beta-D-Man-(1-&gt;4)-beta-D-GlcNAc-(1-&gt;4)-beta-D-GlcNAc}-L-asparaginyl-[protein] + UDP + H(+). The catalysed reaction is an N(4)-{beta-D-GlcNAc-(1-&gt;2)-alpha-D-Man-(1-&gt;3)-[alpha-D-Man-(1-&gt;6)]-beta-D-Man-(1-&gt;4)-beta-D-GlcNAc-(1-&gt;4)-beta-D-GlcNAc}-L-asparaginyl-[protein] + UDP-N-acetyl-alpha-D-glucosamine = an N(4)-{beta-D-GlcNAc-(1-&gt;2)-[beta-D-GlcNAc-(1-&gt;4)]-alpha-D-Man-(1-&gt;3)-[alpha-D-Man-(1-&gt;6)]-beta-D-Man-(1-&gt;4)-beta-D-GlcNAc-(1-&gt;4)-beta-D-GlcNAc}-L-asparaginyl-[protein] + UDP + H(+). The enzyme catalyses an N(4)-{beta-D-GlcNAc-(1-&gt;2)-alpha-D-Man-(1-&gt;3)-[beta-D-GlcNAc-(1-&gt;2)-[beta-D-GlcNAc-(1-&gt;6)]-alpha-D-Man-(1-&gt;6)]-beta-D-Man-(1-&gt;4)-beta-D-GlcNAc-(1-&gt;4)-beta-D-GlcNAc}-L-asparaginyl-[protein] + UDP-N-acetyl-alpha-D-glucosamine = an N(4)-{beta-D-GlcNAc-(1-&gt;2)-[beta-D-GlcNAc-(1-&gt;4)]-alpha-D-Man-(1-&gt;3)-[beta-D-GlcNAc-(1-&gt;2)-[beta-D-GlcNAc-(1-&gt;6)]-alpha-D-Man-(1-&gt;6)]-beta-D-Man-(1-&gt;4)-beta-D-GlcNAc-(1-&gt;4)-beta-D-GlcNAc}-L-asparaginyl-[protein] + UDP + H(+). It catalyses the reaction an N(4)-{beta-D-GlcNAc-(1-&gt;2)-alpha-D-Man-(1-&gt;3)-[beta-D-GlcNAc-(1-&gt;2)-alpha-D-Man-(1-&gt;6)]-beta-D-Man-(1-&gt;4)-beta-D-GlcNAc-(1-&gt;4)-[alpha-L-Fuc-(1-&gt;6)]-beta-D-GlcNAc}-L-asparaginyl-[protein] + UDP-N-acetyl-alpha-D-glucosamine = N(4)-{beta-D-GlcNAc-(1-&gt;2)-[beta-D-GlcNAc-(1-&gt;4)]-alpha-D-Man-(1-&gt;3)-[beta-D-GlcNAc-(1-&gt;2)-alpha-D-Man-(1-&gt;6)]-beta-D-Man-(1-&gt;4)-beta-D-GlcNAc-(1-&gt;4)-[alpha-L-Fuc-(1-&gt;6)]-beta-D-GlcNAc}-asparaginyl-[protein] + UDP + H(+). It carries out the reaction an N(4)-{beta-D-GlcNAc-(1-&gt;2)-alpha-D-Man-(1-&gt;3)-[beta-D-Gal-(1-&gt;4)-beta-D-GlcNAc-(1-&gt;2)-alpha-D-Man-(1-&gt;6)]-beta-D-Man-(1-&gt;4)-beta-D-GlcNAc-(1-&gt;4)-beta-D-GlcNAc}-L-asparaginyl-[protein] + UDP-N-acetyl-alpha-D-glucosamine = an N(4)-{beta-D-GlcNAc-(1-&gt;2)-[beta-D-GlcNAc-(1-&gt;4)]-alpha-D-Man-(1-&gt;3)-[beta-D-Gal-(1-&gt;4)-beta-D-GlcNAc-(1-&gt;2)-alpha-D-Man-(1-&gt;6)]-beta-D-Man-(1-&gt;4)-beta-D-GlcNAc-(1-&gt;4)-beta-D-GlcNAc}-L-asparaginyl-[protein] + UDP + H(+). The catalysed reaction is N(4)-{beta-D-GlcNAc-(1-&gt;2)-alpha-D-Man-(1-&gt;3)-[alpha-D-Man-(1-&gt;3)-{alpha-D-Man-(1-&gt;6)}-alpha-D-Man-(1-&gt;6)]-beta-D-Man-(1-&gt;4)-beta-D-GlcNAc-(1-&gt;4)-beta-D-GlcNAc}-asparaginyl-[protein] + UDP-N-acetyl-alpha-D-glucosamine = N(4)-{beta-D-GlcNAc-(1-&gt;2)-[beta-D-GlcNAc-(1-&gt;4)]-alpha-D-Man-(1-&gt;3)-[alpha-D-Man-(1-&gt;3)-{alpha-D-Man-(1-&gt;6)}-alpha-D-Man-(1-&gt;6)]-beta-D-Man-(1-&gt;4)-beta-D-GlcNAc-(1-&gt;4)-beta-D-GlcNAc}-asparaginyl-[protein] + UDP + H(+). The enzyme catalyses N(4)-{beta-D-GlcNAc-(1-&gt;2)-alpha-D-Man-(1-&gt;3)-beta-D-Man-(1-&gt;4)-beta-D-GlcNAc-(1-&gt;4)-beta-D-GlcNAc}-asparaginyl-[protein] + UDP-N-acetyl-alpha-D-glucosamine = N(4)-{beta-D-GlcNAc-(1-&gt;2)-[beta-D-GlcNAc-(1-&gt;4)]-alpha-D-Man-(1-&gt;3)-beta-D-Man-(1-&gt;4)-beta-D-GlcNAc-(1-&gt;4)-beta-D-GlcNAc}-asparaginyl-[protein] + UDP + H(+). The protein operates within protein modification; protein glycosylation. Inhibited by UDP. Glycosyltransferase that catalyze the transfer of GlcNAc from UDP-GlcNAc to the GlcNAcbeta1-2Manalpha1-3 arm of the core structure of N-linked glycans through a beta1-4 linkage and participates in the production of tri- and tetra-antennary N-linked sugar chains. Involved in glucose transport by mediating SLC2A2/GLUT2 glycosylation, thereby controlling cell-surface expression of SLC2A2 in pancreatic beta cells. The protein is Alpha-1,3-mannosyl-glycoprotein 4-beta-N-acetylglucosaminyltransferase A of Mus musculus (Mouse).